The sequence spans 291 residues: Serine hydrolase BPHL (291 aa).

The first 37 residues, 1 to 37 (MVAVLGGRGVLRLRLLLSALKPGIHVPRAGPAAAFGT), serve as a signal peptide directing secretion. The AB hydrolase-1 domain maps to 62 to 181 (AVLLLPGMLG…DSMIYEGIRD (120 aa)). N6-acetyllysine occurs at positions 86 and 119. At Lys126 the chain carries N6-acetyllysine; alternate. Position 126 is an N6-succinyllysine; alternate (Lys126). The active-site Nucleophile is Ser139. Residue Lys184 is modified to N6-succinyllysine. N6-acetyllysine; alternate is present on Lys191. N6-succinyllysine; alternate is present on Lys191. The residue at position 217 (Lys217) is an N6-acetyllysine. Asp221 contacts Mg(2+). N6-acetyllysine is present on Lys243. The Charge relay system role is filled by Asp244. N6-acetyllysine; alternate is present on residues Lys260 and Lys271. 2 positions are modified to N6-succinyllysine; alternate: Lys260 and Lys271. His272 acts as the Charge relay system in catalysis.

This sequence belongs to the AB hydrolase superfamily. Lipase family. Monomer. May also form homodimers. In terms of tissue distribution, expressed at high levels in liver and kidney and lower levels in heart, intestine and skeletal muscle.

It is found in the mitochondrion. The enzyme catalyses L-homocysteine thiolactone + H2O = L-homocysteine + H(+). The catalysed reaction is valacyclovir + H2O = acyclovir + L-valine + H(+). Functionally, specific alpha-amino acid ester serine hydrolase that prefers small, hydrophobic, and aromatic side chains and does not have a stringent requirement for the leaving group other than preferring a primary alcohol. Has homocysteine-thiolactonase activity (in vitro) and may play a significant role in the detoxification of homocysteine thiolactone in vivo. Catalyzes the hydrolytic activation of amino acid ester prodrugs of nucleoside analogs such as valacyclovir and valganciclovir, converting them into their active forms (acyclovir and ganciclovir). This chain is Serine hydrolase BPHL (BPHL), found in Homo sapiens (Human).